We begin with the raw amino-acid sequence, 249 residues long: Diphthine synthase (249 aa).

S-adenosyl-L-methionine is bound by residues D83, L86, 111–112 (SI), L163, and L205.

This sequence belongs to the diphthine synthase family. As to quaternary structure, homodimer.

It carries out the reaction 2-[(3S)-amino-3-carboxypropyl]-L-histidyl-[translation elongation factor 2] + 3 S-adenosyl-L-methionine = diphthine-[translation elongation factor 2] + 3 S-adenosyl-L-homocysteine + 3 H(+). The protein operates within protein modification; peptidyl-diphthamide biosynthesis. In terms of biological role, S-adenosyl-L-methionine-dependent methyltransferase that catalyzes the trimethylation of the amino group of the modified target histidine residue in translation elongation factor 2 (EF-2), to form an intermediate called diphthine. The three successive methylation reactions represent the second step of diphthamide biosynthesis. This is Diphthine synthase from Pyrobaculum islandicum (strain DSM 4184 / JCM 9189 / GEO3).